A 443-amino-acid polypeptide reads, in one-letter code: D-serine dehydratase (443 aa).

An N6-(pyridoxal phosphate)lysine modification is found at lysine 118.

Belongs to the serine/threonine dehydratase family. DsdA subfamily. Monomer. The cofactor is pyridoxal 5'-phosphate.

It catalyses the reaction D-serine = pyruvate + NH4(+). In Escherichia coli O17:K52:H18 (strain UMN026 / ExPEC), this protein is D-serine dehydratase.